Consider the following 451-residue polypeptide: Tetraspanin-14 (451 aa).

Over 1–56 (MPHRAPRRFMKTAPGACDWEQCLLMGSGEPTRARAVVSSSHKQRKPRQEISACLKW) the chain is Cytoplasmic. The Basolateral membrane targeting motif lies at 20–24 (EQCLL). A helical membrane pass occupies residues 57–77 (LVFLLNSIVFLVGVGILALGV). Residues 78–96 (YLFIKDFREVKLVDIILNP) are Extracellular-facing. The chain crosses the membrane as a helical span at residues 97–117 (AILISIFGFSICVVSFFGFMG). Residues 118–130 (ALRDNIFLLKCFA) are Cytoplasmic-facing. The helical transmembrane segment at 131-151 (ACVFLSYILVVAVTLVFFTLF) threads the bilayer. Over 152–285 (YTDTTEGLSA…QPLRTLFESH (134 aa)) the chain is Extracellular. Residues asparagine 205 and asparagine 211 are each glycosylated (N-linked (GlcNAc...) asparagine). The chain crosses the membrane as a helical span at residues 286–306 (AVHVGAFVALLIVPVCISVCL). The Cytoplasmic portion of the chain corresponds to 307–451 (TNILAKQVDH…TDLVPQKSKS (145 aa)). Residues 328–451 (NDRRRKRDHN…TDLVPQKSKS (124 aa)) are disordered. Positions 366 to 376 (PDIPPPLPPIE) are enriched in pro residues. Residues 410-434 (ATTTRTPPAAAGPAPTPQATTTNRT) are compositionally biased toward low complexity. Residues 435-444 (HQWVLQQTDL) are compositionally biased toward polar residues.

This sequence belongs to the tetraspanin (TM4SF) family. As to expression, expressed in the germline, particularly in sperm cells. Expressed in the germline (particularly in sperm cells), anterior sensory cilia, hypodermis and vulva (at protein level). In terms of tissue distribution, expressed in the pharynx, hypodermis and vulva (at protein level).

Its subcellular location is the cell membrane. The protein resides in the cytoplasmic vesicle membrane. The protein localises to the endosome membrane. It localises to the early endosome membrane. It is found in the late endosome membrane. Its subcellular location is the recycling endosome membrane. The protein resides in the apical cell membrane. The protein localises to the basolateral cell membrane. In terms of biological role, functions redundantly with tsp-12 to regulate cell surface levels of the BMP type II receptor daf-4 (but not BMP type I receptor sma-6), probably by regulating endosomal sorting and recycling of receptors, preventing their targeting to degradative lysosomes. Together with tsp-12, regulates cell fate specification in the postembryonic mesodermal M lineage, body size, male development and vulva development, probably by positively modulating BMP-like Sma/Mab signaling. Together with tsp-12 involved in maintaining the structural and functional integrity of the endosomal network. Together with tsp-12, probably acts by modulating the activation of glp-1, Notch-like receptor, to regulate germline maturation. Functionally, functions redundantly with tsp-12 to regulate cell fate specification in the postembryonic mesodermal M lineage, body size, embryonic and vulva development. Functions redundantly with tsp-12 to regulate cell fate specification in the postembryonic mesodermal M lineage. Likely plays a complementary role in mesodermal development with tsp-14 isoform a, but may be more critical. This chain is Tetraspanin-14, found in Caenorhabditis elegans.